The following is a 152-amino-acid chain: Large ribosomal subunit protein bL9 (152 aa).

This sequence belongs to the bacterial ribosomal protein bL9 family.

In terms of biological role, binds to the 23S rRNA. The chain is Large ribosomal subunit protein bL9 from Streptococcus thermophilus (strain ATCC BAA-491 / LMD-9).